We begin with the raw amino-acid sequence, 416 residues long: Protein-lysine N-trimethyltransferase SMYD5 (416 aa).

The region spanning 21–351 (GSVEVRYVDS…PGEEICISYL (331 aa)) is the SET domain. The MYND-type zinc finger occupies 98-136 (PELCSVRKDLHQNCPHCQVMYCSAECRLAAAEQYHQILC). Tyrosine 350 serves as a coordination point for S-adenosyl-L-methionine. Positions 383-416 (EADDPNVTSEEEEEEDEEEGEPEDAELGDEMTDV) are disordered.

This sequence belongs to the class V-like SAM-binding methyltransferase superfamily. Interacts with the N-CoR complex. Interacts with EHMT2 and CBX5. Post-translationally, ubiquitinated and degradaed by the proteasome in response to mild hypothermia (32 degrees Celsius), relieving repression of the SP1 gene.

The protein resides in the cytoplasm. It catalyses the reaction L-lysyl-[protein] + 3 S-adenosyl-L-methionine = N(6),N(6),N(6)-trimethyl-L-lysyl-[protein] + 3 S-adenosyl-L-homocysteine + 3 H(+). The enzyme catalyses L-lysyl(20)-[histone H4] + 3 S-adenosyl-L-methionine = N(6),N(6),N(6)-trimethyl-L-lysyl(20)-[histone H4] + 3 S-adenosyl-L-homocysteine + 3 H(+). It carries out the reaction L-lysyl(36)-[histone H3] + 3 S-adenosyl-L-methionine = N(6),N(6),N(6)-trimethyl-L-lysyl(36)-[histone H3] + 3 S-adenosyl-L-homocysteine + 3 H(+). Its function is as follows. Protein-lysine N-trimethyltransferase that specifically catalyzes trimethylation of 'Lys-22' of the RPL40/eL40 subunit of the 60S ribosome, thereby promoting translation elongation and protein synthesis. May also act as a histone methyltransferase in the context of histone octamers, but not on nucleosome substrates: trimethylates 'Lys-36' of histone H3 and 'Lys-20' of histone H4 to form H3K36me3 and H4K20me3, respectively. The histone methyltransferase activity, which is independent of its SET domain, is however unsure in vivo. In association with the NCoR corepressor complex, involved in the repression of toll-like receptor 4 (TLR4)-target inflammatory genes in macrophages, possibly by catalyzing the formation of H4K20me3 at the gene promoters. Plays an important role in embryonic stem (ES) cell self-renewal and differentiation. Maintains genome stability of ES cells during differentiation through regulation of heterochromatin formation and repression of endogenous repetitive DNA elements by promoting H4K20me3 marks. Acts as a regulator of the hypothermia response: its degradation in response to mild hypothermia relieves the formation of H3K36me3 at gene promoters, allowing expression of the neuroprotective gene SP1. The polypeptide is Protein-lysine N-trimethyltransferase SMYD5 (Mus musculus (Mouse)).